A 404-amino-acid polypeptide reads, in one-letter code: Sulfate adenylyltransferase (404 aa).

This sequence belongs to the sulfate adenylyltransferase family.

It carries out the reaction sulfate + ATP + H(+) = adenosine 5'-phosphosulfate + diphosphate. It functions in the pathway sulfur metabolism; hydrogen sulfide biosynthesis; sulfite from sulfate: step 1/3. This chain is Sulfate adenylyltransferase, found in Chlorobaculum tepidum (strain ATCC 49652 / DSM 12025 / NBRC 103806 / TLS) (Chlorobium tepidum).